The following is a 51-amino-acid chain: Large ribosomal subunit protein bL33 (51 aa).

Belongs to the bacterial ribosomal protein bL33 family.

This chain is Large ribosomal subunit protein bL33, found in Nitrosospira multiformis (strain ATCC 25196 / NCIMB 11849 / C 71).